The following is a 210-amino-acid chain: Small ribosomal subunit protein uS5 (210 aa).

Residues 1 to 11 are compositionally biased toward polar residues; it reads MTQPNTQTTPN. The disordered stretch occupies residues 1–56; that stretch reads MTQPNTQTTPNDVPAAAEGQHQEQQQQQRRGGGRERRGGGRRGDRRGQERDSEWQE. The segment covering 18–29 has biased composition (low complexity); sequence EGQHQEQQQQQR. Residues 32 to 56 show a composition bias toward basic and acidic residues; the sequence is GGRERRGGGRRGDRRGQERDSEWQE. Residues 54–117 form the S5 DRBM domain; it reads WQERVVQIRR…ADGKKHLVKV (64 aa).

It belongs to the universal ribosomal protein uS5 family. As to quaternary structure, part of the 30S ribosomal subunit. Contacts proteins S4 and S8.

Functionally, with S4 and S12 plays an important role in translational accuracy. Its function is as follows. Located at the back of the 30S subunit body where it stabilizes the conformation of the head with respect to the body. This is Small ribosomal subunit protein uS5 from Prochlorococcus marinus (strain MIT 9303).